The primary structure comprises 505 residues: Histidine--tRNA ligase (505 aa).

This sequence belongs to the class-II aminoacyl-tRNA synthetase family. Homodimer.

The protein resides in the cytoplasm. It carries out the reaction tRNA(His) + L-histidine + ATP = L-histidyl-tRNA(His) + AMP + diphosphate + H(+). The sequence is that of Histidine--tRNA ligase from Jannaschia sp. (strain CCS1).